The primary structure comprises 225 residues: NAD(P)H-quinone oxidoreductase subunit K, chloroplastic (225 aa).

The [4Fe-4S] cluster site is built by Cys-43, Cys-44, Cys-108, and Cys-139.

The protein belongs to the complex I 20 kDa subunit family. NDH is composed of at least 16 different subunits, 5 of which are encoded in the nucleus. [4Fe-4S] cluster serves as cofactor.

Its subcellular location is the plastid. The protein localises to the chloroplast thylakoid membrane. It catalyses the reaction a plastoquinone + NADH + (n+1) H(+)(in) = a plastoquinol + NAD(+) + n H(+)(out). The enzyme catalyses a plastoquinone + NADPH + (n+1) H(+)(in) = a plastoquinol + NADP(+) + n H(+)(out). In terms of biological role, NDH shuttles electrons from NAD(P)H:plastoquinone, via FMN and iron-sulfur (Fe-S) centers, to quinones in the photosynthetic chain and possibly in a chloroplast respiratory chain. The immediate electron acceptor for the enzyme in this species is believed to be plastoquinone. Couples the redox reaction to proton translocation, and thus conserves the redox energy in a proton gradient. The protein is NAD(P)H-quinone oxidoreductase subunit K, chloroplastic of Vitis vinifera (Grape).